Consider the following 252-residue polypeptide: Phosphonates import ATP-binding protein PhnC 1 (252 aa).

Residues 2 to 244 (ISLNKLGVTY…QLEEIYQTLS (243 aa)) enclose the ABC transporter domain. Position 35–42 (35–42 (GSSGAGKS)) interacts with ATP.

This sequence belongs to the ABC transporter superfamily. Phosphonates importer (TC 3.A.1.9.1) family. The complex is composed of two ATP-binding proteins (PhnC), two transmembrane proteins (PhnE) and a solute-binding protein (PhnD).

It localises to the cell inner membrane. It carries out the reaction phosphonate(out) + ATP + H2O = phosphonate(in) + ADP + phosphate + H(+). Its function is as follows. Part of the ABC transporter complex PhnCDE involved in phosphonates import. Responsible for energy coupling to the transport system. The polypeptide is Phosphonates import ATP-binding protein PhnC 1 (Trichodesmium erythraeum (strain IMS101)).